Here is a 217-residue protein sequence, read N- to C-terminus: Large ribosomal subunit protein uL4 (217 aa).

Residues 46-102 (KRQGTHSAKTRAEVSGGGRKPFRQKGTGRARQGSIRAPHFTGGGISHGPKPRDYSQR) form a disordered region.

This sequence belongs to the universal ribosomal protein uL4 family. Part of the 50S ribosomal subunit.

Functionally, one of the primary rRNA binding proteins, this protein initially binds near the 5'-end of the 23S rRNA. It is important during the early stages of 50S assembly. It makes multiple contacts with different domains of the 23S rRNA in the assembled 50S subunit and ribosome. Its function is as follows. Forms part of the polypeptide exit tunnel. In Corynebacterium diphtheriae (strain ATCC 700971 / NCTC 13129 / Biotype gravis), this protein is Large ribosomal subunit protein uL4.